Consider the following 111-residue polypeptide: Toxin 3FTx-Tri2 (111 aa).

A signal peptide spans 1 to 19 (MKTLLLALVVLAFVCLGSA). Positions 20–34 (DQVGLGKEQIDRGRR) are excised as a propeptide. Gln35 carries the post-translational modification Pyrrolidone carboxylic acid. 5 disulfide bridges follow: Cys44-Cys68, Cys47-Cys55, Cys61-Cys87, Cys91-Cys102, and Cys103-Cys108.

This sequence belongs to the three-finger toxin family. Ancestral subfamily. Boigatoxin sub-subfamily. In terms of tissue distribution, expressed by the venom gland.

The protein localises to the secreted. Its function is as follows. Potent postsynaptic neurotoxin. Displays readily reversible competitive antagonism at the nicotinic acetylcholine receptor (nAChR). The chain is Toxin 3FTx-Tri2 from Trimorphodon biscutatus (Western lyre snake).